A 255-amino-acid chain; its full sequence is Imidazole glycerol phosphate synthase subunit HisF (255 aa).

Active-site residues include Asp-11 and Asp-130.

The protein belongs to the HisA/HisF family. As to quaternary structure, heterodimer of HisH and HisF.

Its subcellular location is the cytoplasm. It catalyses the reaction 5-[(5-phospho-1-deoxy-D-ribulos-1-ylimino)methylamino]-1-(5-phospho-beta-D-ribosyl)imidazole-4-carboxamide + L-glutamine = D-erythro-1-(imidazol-4-yl)glycerol 3-phosphate + 5-amino-1-(5-phospho-beta-D-ribosyl)imidazole-4-carboxamide + L-glutamate + H(+). Its pathway is amino-acid biosynthesis; L-histidine biosynthesis; L-histidine from 5-phospho-alpha-D-ribose 1-diphosphate: step 5/9. In terms of biological role, IGPS catalyzes the conversion of PRFAR and glutamine to IGP, AICAR and glutamate. The HisF subunit catalyzes the cyclization activity that produces IGP and AICAR from PRFAR using the ammonia provided by the HisH subunit. The polypeptide is Imidazole glycerol phosphate synthase subunit HisF (Syntrophotalea carbinolica (strain DSM 2380 / NBRC 103641 / GraBd1) (Pelobacter carbinolicus)).